A 271-amino-acid polypeptide reads, in one-letter code: MTLTKRIIPCIDVDVDENGDAAVYTGVNFEDLEYTGDPVEMAKAYNESGADEFVFLDITASAEGRETMLDTVSAVADEVFIPLTVGGGIRTRADIKETLRAGADKVSINSGAIAEPDLINEGAAAFGSQCIVISVDARRRFDSEGEHYTEVDGESCWFECTVKGGREGTGLDVIEWATEAEERGAGELFVNSIDADGTKDGYDIPLMKAVCDTVSTPVIASSGCGSPEDMEEVFVDAGADAGLAASIFHFGEYSIAETKEYLDSKGIPVRL.

Residues Asp12 and Asp136 contribute to the active site.

This sequence belongs to the HisA/HisF family. In terms of assembly, heterodimer of HisH and HisF.

The protein localises to the cytoplasm. It carries out the reaction 5-[(5-phospho-1-deoxy-D-ribulos-1-ylimino)methylamino]-1-(5-phospho-beta-D-ribosyl)imidazole-4-carboxamide + L-glutamine = D-erythro-1-(imidazol-4-yl)glycerol 3-phosphate + 5-amino-1-(5-phospho-beta-D-ribosyl)imidazole-4-carboxamide + L-glutamate + H(+). It functions in the pathway amino-acid biosynthesis; L-histidine biosynthesis; L-histidine from 5-phospho-alpha-D-ribose 1-diphosphate: step 5/9. Functionally, IGPS catalyzes the conversion of PRFAR and glutamine to IGP, AICAR and glutamate. The HisF subunit catalyzes the cyclization activity that produces IGP and AICAR from PRFAR using the ammonia provided by the HisH subunit. The sequence is that of Imidazole glycerol phosphate synthase subunit HisF from Haloarcula marismortui (strain ATCC 43049 / DSM 3752 / JCM 8966 / VKM B-1809) (Halobacterium marismortui).